A 296-amino-acid chain; its full sequence is NH(3)-dependent NAD(+) synthetase (296 aa).

30-37 (GVSGGLDS) lines the ATP pocket. Residue D36 participates in Mg(2+) binding. R157 is a binding site for deamido-NAD(+). Residue E182 coordinates Mg(2+). Deamido-NAD(+) is bound by residues K190 and D197. Residues K206 and S228 each coordinate ATP.

It belongs to the NAD synthetase family. In terms of assembly, homodimer.

It carries out the reaction deamido-NAD(+) + NH4(+) + ATP = AMP + diphosphate + NAD(+) + H(+). The protein operates within cofactor biosynthesis; NAD(+) biosynthesis; NAD(+) from deamido-NAD(+) (ammonia route): step 1/1. Catalyzes the ATP-dependent amidation of deamido-NAD to form NAD. Uses ammonia as a nitrogen source. The polypeptide is NH(3)-dependent NAD(+) synthetase (Coprothermobacter proteolyticus (strain ATCC 35245 / DSM 5265 / OCM 4 / BT)).